The sequence spans 201 residues: FMN-dependent NADH:quinone oxidoreductase (201 aa).

Residues 92 to 95 (MWNL) and 136 to 139 (STGG) contribute to the FMN site.

Belongs to the azoreductase type 1 family. Homodimer. FMN serves as cofactor.

It catalyses the reaction 2 a quinone + NADH + H(+) = 2 a 1,4-benzosemiquinone + NAD(+). It carries out the reaction N,N-dimethyl-1,4-phenylenediamine + anthranilate + 2 NAD(+) = 2-(4-dimethylaminophenyl)diazenylbenzoate + 2 NADH + 2 H(+). In terms of biological role, quinone reductase that provides resistance to thiol-specific stress caused by electrophilic quinones. Also exhibits azoreductase activity. Catalyzes the reductive cleavage of the azo bond in aromatic azo compounds to the corresponding amines. This Coprothermobacter proteolyticus (strain ATCC 35245 / DSM 5265 / OCM 4 / BT) protein is FMN-dependent NADH:quinone oxidoreductase.